The chain runs to 186 residues: Large ribosomal subunit protein uL5c (186 aa).

The protein belongs to the universal ribosomal protein uL5 family. In terms of assembly, part of the 50S ribosomal subunit; contacts the 5S rRNA.

The protein localises to the plastid. It localises to the chloroplast. Its function is as follows. Binds 5S rRNA, forms part of the central protuberance of the 50S subunit. The polypeptide is Large ribosomal subunit protein uL5c (rpl5) (Pleurastrum terricola (Filamentous green alga)).